The primary structure comprises 609 residues: Putative pectinesterase/pectinesterase inhibitor 45 (609 aa).

Residues 25–45 form a helical membrane-spanning segment; sequence IILGVVSVLVVAAAIIGGAFA. 10 N-linked (GlcNAc...) asparagine glycosylation sites follow: Asn51, Asn62, Asn100, Asn114, Asn183, Asn229, Asn296, Asn306, Asn346, and Asn362. Residues 54 to 87 form a disordered region; that stretch reads QEQGKTTNNKSKDSPTKSESPSPKPPSSAAQTVK. A pectinesterase inhibitor 45 region spans residues 89–241; the sequence is GQVDKIIQTL…QVLTSNSLAM (153 aa). Residues 296–593 are pectinesterase 45; the sequence is NATVAKDGSG…FTVGPFLQGE (298 aa). Residues Thr371 and Gln401 each coordinate substrate. The Proton donor; for pectinesterase activity role is filled by Asp424. Cys438 and Cys458 are disulfide-bonded. Asp445 functions as the Nucleophile; for pectinesterase activity in the catalytic mechanism. A glycan (N-linked (GlcNAc...) asparagine) is linked at Asn491. Substrate-binding residues include Arg513 and Trp515.

In the N-terminal section; belongs to the PMEI family. It in the C-terminal section; belongs to the pectinesterase family. Expressed in flower buds and pollen.

Its subcellular location is the membrane. It carries out the reaction [(1-&gt;4)-alpha-D-galacturonosyl methyl ester](n) + n H2O = [(1-&gt;4)-alpha-D-galacturonosyl](n) + n methanol + n H(+). Its pathway is glycan metabolism; pectin degradation; 2-dehydro-3-deoxy-D-gluconate from pectin: step 1/5. Its function is as follows. Acts in the modification of cell walls via demethylesterification of cell wall pectin. The polypeptide is Putative pectinesterase/pectinesterase inhibitor 45 (PME45) (Arabidopsis thaliana (Mouse-ear cress)).